Here is a 173-residue protein sequence, read N- to C-terminus: DRBM domain-containing protein 340R (173 aa).

Residues 30 to 102 form the DRBM domain; it reads NSIGFLNEFC…AFKTIKELNL (73 aa).

The polypeptide is DRBM domain-containing protein 340R (Invertebrate iridescent virus 6 (IIV-6)).